We begin with the raw amino-acid sequence, 429 residues long: Adenylosuccinate synthetase (429 aa).

GTP contacts are provided by residues 12 to 18 (GDEGKGK) and 40 to 42 (GHT). Aspartate 13 acts as the Proton acceptor in catalysis. The Mg(2+) site is built by aspartate 13 and glycine 40. IMP is bound by residues 13 to 16 (DEGK), 38 to 41 (NAGH), threonine 128, arginine 142, glutamine 223, threonine 238, and arginine 302. Histidine 41 functions as the Proton donor in the catalytic mechanism. Position 298 to 304 (298 to 304 (VNTGRPR)) interacts with substrate. Residues arginine 304, 330–332 (KLD), and 412–414 (GVG) contribute to the GTP site.

The protein belongs to the adenylosuccinate synthetase family. In terms of assembly, homodimer. The cofactor is Mg(2+).

It localises to the cytoplasm. The catalysed reaction is IMP + L-aspartate + GTP = N(6)-(1,2-dicarboxyethyl)-AMP + GDP + phosphate + 2 H(+). Its pathway is purine metabolism; AMP biosynthesis via de novo pathway; AMP from IMP: step 1/2. Its function is as follows. Plays an important role in the de novo pathway of purine nucleotide biosynthesis. Catalyzes the first committed step in the biosynthesis of AMP from IMP. The protein is Adenylosuccinate synthetase of Renibacterium salmoninarum (strain ATCC 33209 / DSM 20767 / JCM 11484 / NBRC 15589 / NCIMB 2235).